The primary structure comprises 126 residues: MKLIQLCILFWCWRAICCQGCELTNITIAVEKEECRFCISINTTWCAGYCYTRDLVYKDPARPNTQKICTFKELVYETIRLPGCAHHSDSFYTYPVATECHCGKCDSDSTDCTVRGLGPSYCSFGE.

Positions 1 to 19 (MKLIQLCILFWCWRAICCQ) are cleaved as a signal peptide. 6 disulfide bridges follow: cysteine 21–cysteine 69, cysteine 35–cysteine 84, cysteine 38–cysteine 122, cysteine 46–cysteine 100, cysteine 50–cysteine 102, and cysteine 105–cysteine 112. N-linked (GlcNAc...) asparagine glycosylation is found at asparagine 25 and asparagine 42.

The protein belongs to the glycoprotein hormones subunit beta family. In terms of assembly, heterodimer. The active follitropin is a heterodimer composed of an alpha chain/CGA shared with other hormones and a unique beta chain/FSHB shown here.

It localises to the secreted. Together with the alpha chain CGA constitutes follitropin, the follicle-stimulating hormone, and provides its biological specificity to the hormone heterodimer. Binds FSHR, a G protein-coupled receptor, on target cells to activate downstream signaling pathways. Follitropin is involved in follicle development and spermatogenesis in reproductive organs. This chain is Follitropin subunit beta (FSHB), found in Phodopus sungorus (Striped hairy-footed hamster).